The chain runs to 448 residues: Phosphoglucosamine mutase (448 aa).

The Phosphoserine intermediate role is filled by Ser-100. The Mg(2+) site is built by Ser-100, Asp-240, Asp-242, and Asp-244. A Phosphoserine modification is found at Ser-100.

It belongs to the phosphohexose mutase family. Homodimer, may form a complex with CdaA. It depends on Mg(2+) as a cofactor. In terms of processing, activated by phosphorylation.

It catalyses the reaction alpha-D-glucosamine 1-phosphate = D-glucosamine 6-phosphate. Its function is as follows. Catalyzes the conversion of glucosamine-6-phosphate to glucosamine-1-phosphate. Glucosamine-1-phosphate is used for cell wall biosynthesis. In Bacillus subtilis (strain 168), this protein is Phosphoglucosamine mutase.